The chain runs to 273 residues: Multidrug-efflux transporter 2 regulator (273 aa).

One can recognise an HTH merR-type domain in the interval 8-77; the sequence is YFTTGEFSKL…LKEIKCLIKG (70 aa). Residues 11 to 30 constitute a DNA-binding region (H-T-H motif); that stretch reads TGEFSKLCRVKKQTLFHYDE.

In terms of biological role, activates transcription of the blt gene in response to structurally dissimilar drugs. This chain is Multidrug-efflux transporter 2 regulator (bltR), found in Bacillus subtilis (strain 168).